A 205-amino-acid polypeptide reads, in one-letter code: NAD(P)H dehydrogenase (quinone) (205 aa).

The region spanning 3–194 (VLVVYYSMYG…AAARYQGKHV (192 aa)) is the Flavodoxin-like domain. FMN is bound by residues 9-14 (SMYGHI) and 82-84 (TRF). Tyr-11 lines the NAD(+) pocket. Trp-102 is a binding site for substrate. His-138 is an FMN binding site.

This sequence belongs to the WrbA family. FMN is required as a cofactor.

The catalysed reaction is a quinone + NADH + H(+) = a quinol + NAD(+). The enzyme catalyses a quinone + NADPH + H(+) = a quinol + NADP(+). The protein is NAD(P)H dehydrogenase (quinone) of Geotalea daltonii (strain DSM 22248 / JCM 15807 / FRC-32) (Geobacter daltonii).